A 601-amino-acid polypeptide reads, in one-letter code: Glutathione-regulated potassium-efflux system protein KefB (601 aa).

Transmembrane regions (helical) follow at residues 4–24 (SDFL…VPLA), 29–49 (IGAV…GLGF), 55–75 (EILH…GLEL), 87–107 (IFGV…GLLM), 115–135 (AAVV…LQLM), 152–172 (VLLF…LLAG), 177–197 (HFDW…LIGG), 207–227 (FIAA…LVLG), 230–250 (LFMD…GVLL), 262–282 (AIDP…GMSL), 284–304 (LGVL…LVAV), 324–344 (MQFA…FSTA), and 356–376 (ALLL…MKLV). Positions 400-519 (KPQVIVVGFG…AGVTQFSRET (120 aa)) constitute an RCK N-terminal domain.

This sequence belongs to the monovalent cation:proton antiporter 2 (CPA2) transporter (TC 2.A.37) family. KefB subfamily. As to quaternary structure, interacts with the regulatory subunit KefG.

The protein resides in the cell inner membrane. In terms of biological role, pore-forming subunit of a potassium efflux system that confers protection against electrophiles. Catalyzes K(+)/H(+) antiport. The sequence is that of Glutathione-regulated potassium-efflux system protein KefB from Shigella boydii serotype 18 (strain CDC 3083-94 / BS512).